A 199-amino-acid chain; its full sequence is Holliday junction branch migration complex subunit RuvA (199 aa).

Residues Met1–Arg64 are domain I. The domain II stretch occupies residues Thr65–Glu143. A flexible linker region spans residues Ala144–Ala154. The segment at Ala154–Lys199 is domain III.

Belongs to the RuvA family. Homotetramer. Forms an RuvA(8)-RuvB(12)-Holliday junction (HJ) complex. HJ DNA is sandwiched between 2 RuvA tetramers; dsDNA enters through RuvA and exits via RuvB. An RuvB hexamer assembles on each DNA strand where it exits the tetramer. Each RuvB hexamer is contacted by two RuvA subunits (via domain III) on 2 adjacent RuvB subunits; this complex drives branch migration. In the full resolvosome a probable DNA-RuvA(4)-RuvB(12)-RuvC(2) complex forms which resolves the HJ.

The protein localises to the cytoplasm. In terms of biological role, the RuvA-RuvB-RuvC complex processes Holliday junction (HJ) DNA during genetic recombination and DNA repair, while the RuvA-RuvB complex plays an important role in the rescue of blocked DNA replication forks via replication fork reversal (RFR). RuvA specifically binds to HJ cruciform DNA, conferring on it an open structure. The RuvB hexamer acts as an ATP-dependent pump, pulling dsDNA into and through the RuvAB complex. HJ branch migration allows RuvC to scan DNA until it finds its consensus sequence, where it cleaves and resolves the cruciform DNA. The polypeptide is Holliday junction branch migration complex subunit RuvA (Geobacter metallireducens (strain ATCC 53774 / DSM 7210 / GS-15)).